Here is a 450-residue protein sequence, read N- to C-terminus: Regulator of sigma-E protease RseP (450 aa).

The helical transmembrane segment at 1 to 21 (MLSILWNLAAFIIALGVLITV) threads the bilayer. Position 22 (His22) interacts with Zn(2+). Over 22 to 103 (HEFGHFWVAR…VGQRAAIIAA (82 aa)) the chain is Periplasmic. Glu23 is an active-site residue. His26 serves as a coordination point for Zn(2+). The helical transmembrane segment at 104-124 (GPVANFIFAIFAYWLVFIIGV) threads the bilayer. 2 consecutive PDZ domains span residues 115-186 (AYWL…APFG) and 199-291 (HWAF…TPDT). At 125–375 (PGVRPVIGEI…QGAGMSAEFG (251 aa)) the chain is on the cytoplasmic side. Residues 376 to 396 (VIYYLMFLALISVNLGIINLF) form a helical membrane-spanning segment. At 397-429 (PLPVLDGGHLLFLAIEKLKGGPVSERVQDFSYR) the chain is on the periplasmic side. The chain crosses the membrane as a helical span at residues 430-450 (IGSILLVLLMGLALFNDFSRL).

This sequence belongs to the peptidase M50B family. Zn(2+) serves as cofactor.

The protein localises to the cell inner membrane. In terms of biological role, a site-2 regulated intramembrane protease that cleaves the peptide bond between 'Ala-108' and 'Cys-109' in the transmembrane region of RseA. Part of a regulated intramembrane proteolysis (RIP) cascade. Acts on DegS-cleaved RseA to release the cytoplasmic domain of RseA. This provides the cell with sigma-E (RpoE) activity through the proteolysis of RseA. The protein is Regulator of sigma-E protease RseP (rsep) of Salmonella typhimurium (strain 14028s / SGSC 2262).